The sequence spans 458 residues: tRNA modification GTPase MnmE (458 aa).

(6S)-5-formyl-5,6,7,8-tetrahydrofolate-binding residues include R26, E88, and R127. In terms of domain architecture, TrmE-type G spans 224–378 (GLSTAIIGRP…IEDRINQLFF (155 aa)). N234 contacts K(+). GTP contacts are provided by residues 234-239 (NVGKSS), 253-259 (TDIAGTT), and 278-281 (DTAG). Residue S238 coordinates Mg(2+). Residues T253, I255, and T258 each coordinate K(+). Residue T259 coordinates Mg(2+). (6S)-5-formyl-5,6,7,8-tetrahydrofolate is bound at residue K458.

It belongs to the TRAFAC class TrmE-Era-EngA-EngB-Septin-like GTPase superfamily. TrmE GTPase family. Homodimer. Heterotetramer of two MnmE and two MnmG subunits. K(+) serves as cofactor.

The protein localises to the cytoplasm. Its function is as follows. Exhibits a very high intrinsic GTPase hydrolysis rate. Involved in the addition of a carboxymethylaminomethyl (cmnm) group at the wobble position (U34) of certain tRNAs, forming tRNA-cmnm(5)s(2)U34. In Streptococcus pyogenes serotype M12 (strain MGAS9429), this protein is tRNA modification GTPase MnmE.